Here is a 257-residue protein sequence, read N- to C-terminus: UPF0246 protein YaaA (257 aa).

Belongs to the UPF0246 family.

This chain is UPF0246 protein YaaA, found in Salmonella arizonae (strain ATCC BAA-731 / CDC346-86 / RSK2980).